Reading from the N-terminus, the 724-residue chain is Catalase-peroxidase (724 aa).

Positions 98–226 (WHSAGSYRIA…LAAVMMGLIY (129 aa)) form a cross-link, tryptophyl-tyrosyl-methioninium (Trp-Tyr) (with M-252). The Proton acceptor role is filled by histidine 99. Positions 226–252 (YVNPEGVDGHPDPQKTANDVRVTFARM) form a cross-link, tryptophyl-tyrosyl-methioninium (Tyr-Met) (with W-98). Residue histidine 267 coordinates heme b.

The protein belongs to the peroxidase family. Peroxidase/catalase subfamily. Homodimer or homotetramer. Heme b is required as a cofactor. Post-translationally, formation of the three residue Trp-Tyr-Met cross-link is important for the catalase, but not the peroxidase activity of the enzyme.

The enzyme catalyses H2O2 + AH2 = A + 2 H2O. It carries out the reaction 2 H2O2 = O2 + 2 H2O. In terms of biological role, bifunctional enzyme with both catalase and broad-spectrum peroxidase activity. The chain is Catalase-peroxidase from Edwardsiella tarda.